Here is a 133-residue protein sequence, read N- to C-terminus: Ribosome-binding factor A (133 aa).

This sequence belongs to the RbfA family. In terms of assembly, monomer. Binds 30S ribosomal subunits, but not 50S ribosomal subunits or 70S ribosomes.

It localises to the cytoplasm. Functionally, one of several proteins that assist in the late maturation steps of the functional core of the 30S ribosomal subunit. Associates with free 30S ribosomal subunits (but not with 30S subunits that are part of 70S ribosomes or polysomes). Required for efficient processing of 16S rRNA. May interact with the 5'-terminal helix region of 16S rRNA. This is Ribosome-binding factor A from Cronobacter sakazakii (strain ATCC BAA-894) (Enterobacter sakazakii).